We begin with the raw amino-acid sequence, 675 residues long: Envelope glycoprotein (675 aa).

Positions M1–S34 are cleaved as a signal peptide. The interval A35–P270 is receptor-binding domain (RBD). Residues A35–L620 are Extracellular-facing. N46 is a glycosylation site (N-linked (GlcNAc...) asparagine; by host). Intrachain disulfides connect C80–C132, C106–C121, C107–C117, C155–C175, and C167–C180. Zn(2+) is bound at residue H89. D120 contacts Zn(2+). N-linked (GlcNAc...) asparagine; by host glycosylation occurs at N202. C212 and C218 are joined by a disulfide. The segment at V276–R323 is disordered. Residues R285 to S295 are compositionally biased toward pro residues. A compositionally biased stretch (low complexity) spans P296–P308. A compositionally biased stretch (pro residues) spans S309–A318. N-linked (GlcNAc...) asparagine; by host glycosylation occurs at N336. 6 disulfide bridges follow: C346–C349, C346–C573, C376–C430, C395–C407, C437–C450, and C565–C572. The short motif at C346–C349 is the CXXC element. Residues N368 and N375 are each glycosylated (N-linked (GlcNAc...) asparagine; by host). N408 and N444 each carry an N-linked (GlcNAc...) asparagine; by host glycan. Positions V482–V502 are fusion peptide. Residues Q513 to V547 adopt a coiled-coil conformation. The segment at L548–L564 is immunosuppression. The CX6CC signature appears at C565–C573. A helical transmembrane segment spans residues I621–I641. A lipid anchor (S-palmitoyl cysteine; by host) is attached at C640. At L642 to P675 the chain is on the cytoplasmic side. Residues Y665–L668 carry the YXXL motif; contains endocytosis signal motif.

The mature envelope protein (Env) consists of a trimer of SU-TM heterodimers attached by a labile interchain disulfide bond. In terms of processing, specific enzymatic cleavages in vivo yield mature proteins. Envelope glycoproteins are synthesized as an inactive precursor that is N-glycosylated and processed likely by host cell furin or by a furin-like protease in the Golgi to yield the mature SU and TM proteins. The cleavage site between SU and TM requires the minimal sequence [KR]-X-[KR]-R. The R-peptide is released from the C-terminus of the cytoplasmic tail of the TM protein upon particle formation as a result of proteolytic cleavage by the viral protease. Cleavage of this peptide is required for TM to become fusogenic. The CXXC motif is highly conserved across a broad range of retroviral envelope proteins. It is thought to participate in the formation of a labile disulfide bond possibly with the CX6CC motif present in the transmembrane protein. Isomerization of the intersubunit disulfide bond to an SU intrachain disulfide bond is thought to occur upon receptor recognition in order to allow membrane fusion. Post-translationally, the transmembrane protein is palmitoylated. In terms of processing, the R-peptide is palmitoylated.

The protein resides in the virion membrane. It localises to the host cell membrane. Functionally, the surface protein (SU) attaches the virus to the host cell by binding to its receptor. This interaction triggers the refolding of the transmembrane protein (TM) and is thought to activate its fusogenic potential by unmasking its fusion peptide. Fusion occurs at the host cell plasma membrane. Its function is as follows. The transmembrane protein (TM) acts as a class I viral fusion protein. Under the current model, the protein has at least 3 conformational states: pre-fusion native state, pre-hairpin intermediate state, and post-fusion hairpin state. During viral and target cell membrane fusion, the coiled coil regions (heptad repeats) assume a trimer-of-hairpins structure, positioning the fusion peptide in close proximity to the C-terminal region of the ectodomain. The formation of this structure appears to drive apposition and subsequent fusion of viral and target cell membranes. Membranes fusion leads to delivery of the nucleocapsid into the cytoplasm. This is Envelope glycoprotein (env) from Mus musculus (Mouse).